The primary structure comprises 206 residues: Protein GET1 (206 aa).

The Lumenal segment spans residues 1-4; sequence MPSL. The chain crosses the membrane as a helical span at residues 5 to 24; sequence LITVLFLNVIIYVINTVGAA. Over 25 to 110 the chain is Cytoplasmic; sequence TVDGLLWLLY…TFDMTIKIAR (86 aa). Residues 75 to 100 are a coiled coil; the sequence is AKLRRRHDKAMEAYEAKNNELTQSKS. The chain crosses the membrane as a helical span at residues 111-131; that stretch reads WAATSGLMLFLQFWYSKTPIF. Topologically, residues 132–155 are lumenal; the sequence is TLPPGWIPWQVQWVLSFPRAPMGT. Residues 156–172 traverse the membrane as a helical segment; the sequence is VSIQIWGGACATVVALV. Topologically, residues 173 to 206 are cytoplasmic; sequence GDAMRASLAYVSKPKIDRIKLGATMEGKEGKKRQ.

Belongs to the WRB/GET1 family. Interacts with GET3.

It localises to the endoplasmic reticulum membrane. In terms of biological role, required for the post-translational delivery of tail-anchored (TA) proteins to the endoplasmic reticulum. Acts as a membrane receptor for soluble GET3, which recognizes and selectively binds the transmembrane domain of TA proteins in the cytosol. The polypeptide is Protein GET1 (Ajellomyces capsulatus (strain NAm1 / WU24) (Darling's disease fungus)).